Reading from the N-terminus, the 318-residue chain is Pantothenate kinase (318 aa).

Position 96–103 (96–103 (GSVAVGKS)) interacts with ATP.

It belongs to the prokaryotic pantothenate kinase family.

It localises to the cytoplasm. It carries out the reaction (R)-pantothenate + ATP = (R)-4'-phosphopantothenate + ADP + H(+). It functions in the pathway cofactor biosynthesis; coenzyme A biosynthesis; CoA from (R)-pantothenate: step 1/5. The polypeptide is Pantothenate kinase (Coxiella burnetii (strain Dugway 5J108-111)).